The primary structure comprises 359 residues: Serine/threonine-protein kinase SAPK7 (359 aa).

The Protein kinase domain occupies 4–260 (YELLKDIGAG…IREIRNHPWF (257 aa)). Residues 10–18 (IGAGNFGVA) and Lys33 each bind ATP. Asp123 (proton acceptor) is an active-site residue. Residues 299-359 (EEARTPPRSS…VHASGEFQLS (61 aa)) are disordered. Residues 331-343 (EEQEEEEDAEDEY) show a composition bias toward acidic residues.

Belongs to the protein kinase superfamily. Ser/Thr protein kinase family. In terms of processing, may be phosphorylated. In terms of tissue distribution, weakly expressed in roots. Expressed in roots of young seedlings.

Its subcellular location is the cytoplasm. It localises to the nucleus. The enzyme catalyses L-seryl-[protein] + ATP = O-phospho-L-seryl-[protein] + ADP + H(+). The catalysed reaction is L-threonyl-[protein] + ATP = O-phospho-L-threonyl-[protein] + ADP + H(+). With respect to regulation, activated by hyperosmotic stress. Functionally, may play a role in signal transduction of hyperosmotic response. In Oryza sativa subsp. japonica (Rice), this protein is Serine/threonine-protein kinase SAPK7 (SAPK7).